We begin with the raw amino-acid sequence, 335 residues long: Tetraacyldisaccharide 4'-kinase (335 aa).

59–66 lines the ATP pocket; that stretch reads TAGGNGKT.

This sequence belongs to the LpxK family.

The catalysed reaction is a lipid A disaccharide + ATP = a lipid IVA + ADP + H(+). Its pathway is glycolipid biosynthesis; lipid IV(A) biosynthesis; lipid IV(A) from (3R)-3-hydroxytetradecanoyl-[acyl-carrier-protein] and UDP-N-acetyl-alpha-D-glucosamine: step 6/6. Transfers the gamma-phosphate of ATP to the 4'-position of a tetraacyldisaccharide 1-phosphate intermediate (termed DS-1-P) to form tetraacyldisaccharide 1,4'-bis-phosphate (lipid IVA). This Aliivibrio salmonicida (strain LFI1238) (Vibrio salmonicida (strain LFI1238)) protein is Tetraacyldisaccharide 4'-kinase.